We begin with the raw amino-acid sequence, 185 residues long: uncharacterized protein (185 aa).

Helical transmembrane passes span 32–52 (LIFV…LLAF), 66–86 (LVTL…VLAV), and 155–175 (IGYG…FLVV).

It is found in the cell membrane. This is an uncharacterized protein from Bacillus subtilis (strain 168).